A 309-amino-acid chain; its full sequence is 2-phospho-L-lactate transferase (309 aa).

Aspartate 50 and lysine 89 together coordinate 7,8-didemethyl-8-hydroxy-5-deazariboflavin.

This sequence belongs to the CofD family. In terms of assembly, homodimer. Mg(2+) serves as cofactor.

The catalysed reaction is (2S)-lactyl-2-diphospho-5'-guanosine + 7,8-didemethyl-8-hydroxy-5-deazariboflavin = oxidized coenzyme F420-0 + GMP + H(+). It participates in cofactor biosynthesis; coenzyme F420 biosynthesis. In terms of biological role, catalyzes the transfer of the 2-phospholactate moiety from (2S)-lactyl-2-diphospho-5'-guanosine to 7,8-didemethyl-8-hydroxy-5-deazariboflavin (FO) with the formation of oxidized coenzyme F420-0 and GMP. The sequence is that of 2-phospho-L-lactate transferase from Methanococcus maripaludis (strain C6 / ATCC BAA-1332).